Here is a 338-residue protein sequence, read N- to C-terminus: tRNA N6-adenosine threonylcarbamoyltransferase (338 aa).

Residues His-111 and His-115 each coordinate Fe cation. Substrate contacts are provided by residues 134–138 (LVSGG), Asp-167, Gly-180, and Asn-272. Residue Asp-300 coordinates Fe cation.

Belongs to the KAE1 / TsaD family. Fe(2+) is required as a cofactor.

It is found in the cytoplasm. The enzyme catalyses L-threonylcarbamoyladenylate + adenosine(37) in tRNA = N(6)-L-threonylcarbamoyladenosine(37) in tRNA + AMP + H(+). Functionally, required for the formation of a threonylcarbamoyl group on adenosine at position 37 (t(6)A37) in tRNAs that read codons beginning with adenine. Is involved in the transfer of the threonylcarbamoyl moiety of threonylcarbamoyl-AMP (TC-AMP) to the N6 group of A37, together with TsaE and TsaB. TsaD likely plays a direct catalytic role in this reaction. The chain is tRNA N6-adenosine threonylcarbamoyltransferase from Shewanella sp. (strain ANA-3).